A 601-amino-acid polypeptide reads, in one-letter code: Elongation factor 4 (601 aa).

The 183-residue stretch at 5–187 (ENIRNFCIIA…AIVHHLPAPK (183 aa)) folds into the tr-type G domain. GTP contacts are provided by residues 17–22 (DHGKST) and 134–137 (NKID).

Belongs to the TRAFAC class translation factor GTPase superfamily. Classic translation factor GTPase family. LepA subfamily.

It localises to the cell inner membrane. It catalyses the reaction GTP + H2O = GDP + phosphate + H(+). In terms of biological role, required for accurate and efficient protein synthesis under certain stress conditions. May act as a fidelity factor of the translation reaction, by catalyzing a one-codon backward translocation of tRNAs on improperly translocated ribosomes. Back-translocation proceeds from a post-translocation (POST) complex to a pre-translocation (PRE) complex, thus giving elongation factor G a second chance to translocate the tRNAs correctly. Binds to ribosomes in a GTP-dependent manner. The protein is Elongation factor 4 of Desulfovibrio desulfuricans (strain ATCC 27774 / DSM 6949 / MB).